Here is a 478-residue protein sequence, read N- to C-terminus: Cobyric acid synthase (478 aa).

In terms of domain architecture, GATase cobBQ-type spans 250-437 (QLRVVVPVLP…VHGVFDHPMH (188 aa)). The active-site Nucleophile is Cys-331. His-429 is a catalytic residue.

This sequence belongs to the CobB/CobQ family. CobQ subfamily.

The protein operates within cofactor biosynthesis; adenosylcobalamin biosynthesis. Functionally, catalyzes amidations at positions B, D, E, and G on adenosylcobyrinic A,C-diamide. NH(2) groups are provided by glutamine, and one molecule of ATP is hydrogenolyzed for each amidation. This Xanthomonas euvesicatoria pv. vesicatoria (strain 85-10) (Xanthomonas campestris pv. vesicatoria) protein is Cobyric acid synthase.